The following is a 321-amino-acid chain: Glucokinase (321 aa).

8–13 (GDVGGT) contacts ATP.

Belongs to the bacterial glucokinase family.

It is found in the cytoplasm. The catalysed reaction is D-glucose + ATP = D-glucose 6-phosphate + ADP + H(+). In terms of biological role, not highly important in E.coli as glucose is transported into the cell by the PTS system already as glucose 6-phosphate. This is Glucokinase from Escherichia coli O139:H28 (strain E24377A / ETEC).